Here is an 845-residue protein sequence, read N- to C-terminus: Molybdenum cofactor sulfurase (845 aa).

N6-(pyridoxal phosphate)lysine is present on K240. C404 is a catalytic residue. The region spanning 666 to 840 (SFPQDSSPSS…LMVGDTVTPS (175 aa)) is the MOSC domain.

This sequence belongs to the class-V pyridoxal-phosphate-dependent aminotransferase family. MOCOS subfamily. It depends on pyridoxal 5'-phosphate as a cofactor.

It catalyses the reaction Mo-molybdopterin + L-cysteine + AH2 = thio-Mo-molybdopterin + L-alanine + A + H2O. The protein operates within cofactor biosynthesis; molybdopterin biosynthesis. Its function is as follows. Sulfurates the molybdenum cofactor. Sulfation of molybdenum is essential for xanthine dehydrogenase (XDH) and aldehyde oxidase (ADO) enzymes in which molybdenum cofactor is liganded by 1 oxygen and 1 sulfur atom in active form. In Aspergillus clavatus (strain ATCC 1007 / CBS 513.65 / DSM 816 / NCTC 3887 / NRRL 1 / QM 1276 / 107), this protein is Molybdenum cofactor sulfurase.